Here is a 145-residue protein sequence, read N- to C-terminus: Protoporphyrinogen IX oxidase (145 aa).

Transmembrane regions (helical) follow at residues Leu-6–Leu-26, Ala-61–Leu-81, Thr-83–Ala-103, and Ile-123–Pro-143. His-12 lines the heme pocket. Lys-88 serves as a coordination point for heme.

This sequence belongs to the HemJ family. Homodimer. It depends on heme b as a cofactor.

The protein localises to the cell membrane. The enzyme catalyses protoporphyrinogen IX + 3 A = protoporphyrin IX + 3 AH2. It functions in the pathway porphyrin-containing compound metabolism; protoporphyrin-IX biosynthesis; protoporphyrin-IX from protoporphyrinogen-IX: step 1/1. In terms of biological role, catalyzes the oxidation of protoporphyrinogen IX to protoporphyrin IX. Is involved in the biosynthesis of tetrapyrrole molecules like heme. Does not use oxygen or artificial electron acceptors such as menadione or benzoquinone. The polypeptide is Protoporphyrinogen IX oxidase (Rickettsia prowazekii (strain Madrid E)).